A 286-amino-acid chain; its full sequence is Cysteine-rich repeat secretory protein 57 (286 aa).

Positions 1-20 are cleaved as a signal peptide; the sequence is METTKKLSVLLCLFFTMNQA. The Extracellular portion of the chain corresponds to 21-265; it reads ISESDSDEHM…PSRSGSFSIR (245 aa). 2 consecutive Gnk2-homologous domains span residues 29–131 and 137–247; these read HMAT…DKFF and TKPN…TSNS. Residues Asn35, Asn40, Asn44, Asn60, Asn69, Asn90, Asn100, Asn108, Asn209, and Asn246 are each glycosylated (N-linked (GlcNAc...) asparagine). Residues 266–284 traverse the membrane as a helical segment; that stretch reads GNNKILVGMILAVSVFAFL. The Cytoplasmic portion of the chain corresponds to 285–286; the sequence is GL.

This sequence belongs to the cysteine-rich repeat secretory protein family.

Its subcellular location is the membrane. This chain is Cysteine-rich repeat secretory protein 57 (CRRSP57), found in Arabidopsis thaliana (Mouse-ear cress).